The following is a 268-amino-acid chain: Universal stress protein MT3220 (268 aa).

ATP contacts are provided by residues Gly13, 107 to 113 (GSVGLDH), Arg117, and 120 to 121 (SV).

The protein belongs to the universal stress protein A family.

The polypeptide is Universal stress protein MT3220 (Mycobacterium tuberculosis (strain CDC 1551 / Oshkosh)).